Reading from the N-terminus, the 327-residue chain is MLGPQVWSSVRQGLSRSLSRNVGVWASGEGKKVDIAGIYPPVTTPFTATAEVDYGKLEENLHKLGTFPFRGFVVQGSNGEFPFLTSSERLEVVSRVRQAMPKNRLLLAGSGCESTQATVEMTVSMAQVGADAAMVVTPCYYRGRMSSAALIHHYTKVADLSPIPVVLYSVPANTGLDLPVDAVVTLSQHPNIVGMKDSGGDVTRIGLIVHKTRKQDFQVLAGSAGFLMASYALGAVGGVCALANVLGAQVCQLERLCCTGQWEDAQKLQHRLIEPNAAVTRRFGIPGLKKIMDWFGYYGGPCRAPLQELSPAEEEALRMDFTSNGWL.

Residues 1 to 25 (MLGPQVWSSVRQGLSRSLSRNVGVW) constitute a mitochondrion transit peptide. A substrate-binding site is contributed by 77–78 (SN). Catalysis depends on Lys196, which acts as the Schiff-base intermediate with substrate. Substrate contacts are provided by Ser198 and Gly222.

It belongs to the DapA family. As to quaternary structure, homotetramer.

Its subcellular location is the mitochondrion. It carries out the reaction (4S)-4-hydroxy-2-oxoglutarate = glyoxylate + pyruvate. The enzyme catalyses (4R)-4-hydroxy-2-oxoglutarate = glyoxylate + pyruvate. With respect to regulation, inhibited by divalent cations. In terms of biological role, catalyzes the final step in the metabolic pathway of hydroxyproline. This chain is 4-hydroxy-2-oxoglutarate aldolase, mitochondrial (HOGA1), found in Homo sapiens (Human).